The sequence spans 178 residues: Large ribosomal subunit protein uL6 (178 aa).

It belongs to the universal ribosomal protein uL6 family. In terms of assembly, part of the 50S ribosomal subunit.

This protein binds to the 23S rRNA, and is important in its secondary structure. It is located near the subunit interface in the base of the L7/L12 stalk, and near the tRNA binding site of the peptidyltransferase center. The chain is Large ribosomal subunit protein uL6 from Frankia alni (strain DSM 45986 / CECT 9034 / ACN14a).